The primary structure comprises 70 residues: DNA-directed RNA polymerase subunit omega (70 aa).

This sequence belongs to the RNA polymerase subunit omega family. In terms of assembly, the RNAP catalytic core consists of 2 alpha, 1 beta, 1 beta' and 1 omega subunit. When a sigma factor is associated with the core the holoenzyme is formed, which can initiate transcription.

The enzyme catalyses RNA(n) + a ribonucleoside 5'-triphosphate = RNA(n+1) + diphosphate. In terms of biological role, promotes RNA polymerase assembly. Latches the N- and C-terminal regions of the beta' subunit thereby facilitating its interaction with the beta and alpha subunits. The protein is DNA-directed RNA polymerase subunit omega of Staphylococcus saprophyticus subsp. saprophyticus (strain ATCC 15305 / DSM 20229 / NCIMB 8711 / NCTC 7292 / S-41).